A 430-amino-acid polypeptide reads, in one-letter code: Glutamyl-tRNA reductase (430 aa).

Substrate-binding positions include 49–52, Ser-109, 114–116, and Gln-120; these read TCNR and EGQ. The active-site Nucleophile is Cys-50. Position 189-194 (189-194) interacts with NADP(+); it reads GAGKMA.

This sequence belongs to the glutamyl-tRNA reductase family. In terms of assembly, homodimer.

It catalyses the reaction (S)-4-amino-5-oxopentanoate + tRNA(Glu) + NADP(+) = L-glutamyl-tRNA(Glu) + NADPH + H(+). Its pathway is porphyrin-containing compound metabolism; protoporphyrin-IX biosynthesis; 5-aminolevulinate from L-glutamyl-tRNA(Glu): step 1/2. The protein operates within porphyrin-containing compound metabolism; chlorophyll biosynthesis. In terms of biological role, catalyzes the NADPH-dependent reduction of glutamyl-tRNA(Glu) to glutamate 1-semialdehyde (GSA). The protein is Glutamyl-tRNA reductase of Crocosphaera subtropica (strain ATCC 51142 / BH68) (Cyanothece sp. (strain ATCC 51142)).